A 367-amino-acid polypeptide reads, in one-letter code: MTASQRTLMVMAGGTGGHVFPGLAVAHRMEAAGWRVVWLGNPAGMEATLVPKHGIPMEYVRFGGLRGKGLKTKLTLPVNLLRACWQSLGALRRVRPDVVLGMGGYITFPAGVMTALSGRPLVLHEQNSIAGLTNKVLAKLAKRVLVAFPGALPHAEWTGNPIRAELAHTEPPHARYASRSGPLNVLVVGGSLGAAALNEVVPRALALLAPGERPRVVHQAGVKHIEALKANYEAAGFAAGEDVRLVPFIDDMAAAYAAADLVICRSGAMTVSEIAAVGVAALFVPFPYAVDDHQTTNAAFLAEAGAAVLVQQRDLSAELLADWLRGQSRASLADMAERSRALAKPEATDEVARVCAKAAGANLETLQ.

UDP-N-acetyl-alpha-D-glucosamine contacts are provided by residues 15–17 (TGG), N127, R163, S191, I249, and Q294.

Belongs to the glycosyltransferase 28 family. MurG subfamily.

It is found in the cell inner membrane. It carries out the reaction di-trans,octa-cis-undecaprenyl diphospho-N-acetyl-alpha-D-muramoyl-L-alanyl-D-glutamyl-meso-2,6-diaminopimeloyl-D-alanyl-D-alanine + UDP-N-acetyl-alpha-D-glucosamine = di-trans,octa-cis-undecaprenyl diphospho-[N-acetyl-alpha-D-glucosaminyl-(1-&gt;4)]-N-acetyl-alpha-D-muramoyl-L-alanyl-D-glutamyl-meso-2,6-diaminopimeloyl-D-alanyl-D-alanine + UDP + H(+). It functions in the pathway cell wall biogenesis; peptidoglycan biosynthesis. Its function is as follows. Cell wall formation. Catalyzes the transfer of a GlcNAc subunit on undecaprenyl-pyrophosphoryl-MurNAc-pentapeptide (lipid intermediate I) to form undecaprenyl-pyrophosphoryl-MurNAc-(pentapeptide)GlcNAc (lipid intermediate II). This chain is UDP-N-acetylglucosamine--N-acetylmuramyl-(pentapeptide) pyrophosphoryl-undecaprenol N-acetylglucosamine transferase, found in Burkholderia cenocepacia (strain HI2424).